A 384-amino-acid chain; its full sequence is MEAKDHIERRPDRVSIRRLKLVNFRNYAELSLPLGPGHVVLTGENGSGKTNLIEAISFLSPGRGLRRAAYDDVARANAEGGFAIHAALDCMIYGDAEIGTGTAGGGEGGRKVRINGIAASADDLLDYARILWVVPSMDGLFTGGASDRRRFLDRMVLAIDTAHGKRVLDYEKAMRSRNRLLNDGSNDDQWLDAIENQMAELGTAIAAARAQAMRLIAAMIERLPAEGPFPKADCFLEGALESRIGVEAALDLEEDFRRTLRDGRARDRAAGRTLDGPHRTDLIVQHRPKSMPAALCSTGEQKALLIGLILAHARLTAELSGMAPILLLDEIAAHLDMGRRAALFGILDELGGQAFMTGTDRALFDALAGDAQFFNVSAGQLTGI.

43–50 (GENGSGKT) is an ATP binding site.

Belongs to the RecF family.

It localises to the cytoplasm. Functionally, the RecF protein is involved in DNA metabolism; it is required for DNA replication and normal SOS inducibility. RecF binds preferentially to single-stranded, linear DNA. It also seems to bind ATP. This is DNA replication and repair protein RecF from Brucella suis biovar 1 (strain 1330).